The chain runs to 165 residues: HTH-type transcriptional regulator IscR (165 aa).

In terms of domain architecture, HTH rrf2-type spans 2-131 (RLTSKGRYAV…NNITLAELVS (130 aa)). A DNA-binding region (H-T-H motif) is located at residues 28–51 (LAEISERQGISLSYLEQLFSRLRK). 3 residues coordinate [2Fe-2S] cluster: cysteine 92, cysteine 98, and cysteine 104. A disordered region spans residues 144–165 (NDTRRPLTNGRPQETINVNLHA). Residues 153–165 (GRPQETINVNLHA) show a composition bias toward polar residues.

[2Fe-2S] cluster is required as a cofactor.

Functionally, regulates the transcription of several operons and genes involved in the biogenesis of Fe-S clusters and Fe-S-containing proteins. The protein is HTH-type transcriptional regulator IscR of Sodalis glossinidius (strain morsitans).